The chain runs to 225 residues: Urease accessory protein UreE (225 aa).

The segment covering 171 to 215 (HHGHEHSHDHEHGHSHAAHEHSHGHDHTHGHDHDHGDHVHDESCG) has biased composition (basic and acidic residues). Residues 171–225 (HHGHEHSHDHEHGHSHAAHEHSHGHDHTHGHDHDHGDHVHDESCGHGHHHHHAHR) form a disordered region. Residues 216–225 (HGHHHHHAHR) show a composition bias toward basic residues.

This sequence belongs to the UreE family.

It localises to the cytoplasm. Functionally, involved in urease metallocenter assembly. Binds nickel. Probably functions as a nickel donor during metallocenter assembly. This Paraburkholderia xenovorans (strain LB400) protein is Urease accessory protein UreE.